A 766-amino-acid chain; its full sequence is Protein zer-1 homolog (766 aa).

N-acetylalanine is present on A2. LRR repeat units lie at residues 226-245 (SLVL…IVQL), 246-268 (HKLR…KLTR), and 278-302 (LGNL…KMEE). 5 ARM repeats span residues 427–467 (RSEQ…NFGI), 511–556 (DNDH…NITD), 558–600 (TPDN…NVAE), 602–643 (KELR…HIMF), and 714–756 (PDKY…HCSN).

It belongs to the zyg-11 family. Interacts with the ELOC-ELOB/Elongin BC complex. Part of an E3 ubiquitin ligase complex including ZER1, CUL2 and Elongin BC.

In terms of biological role, serves as substrate adapter subunit in the E3 ubiquitin ligase complex ZYG11B-CUL2-Elongin BC. Acts redudantly with ZYG11B to target substrates bearing N-terminal glycine degrons for proteasomal degradation. Involved in the clearance of proteolytic fragments generated by caspase cleavage during apoptosis since N-terminal glycine degrons are strongly enriched at caspase cleavage sites. Also important in the quality control of protein N-myristoylation in which N-terminal glycine degrons are conditionally exposed after a failure of N-myristoylation. This is Protein zer-1 homolog (ZER1) from Pongo abelii (Sumatran orangutan).